The following is a 169-amino-acid chain: Protein FAM106A (169 aa).

The protein belongs to the FAM106 family.

The sequence is that of Protein FAM106A (FAM106A) from Homo sapiens (Human).